The chain runs to 384 residues: GTPase Obg (384 aa).

The region spanning 1 to 159 is the Obg domain; that stretch reads MKFIDEAKIE…RSLQLELKVL (159 aa). A disordered region spans residues 20-46; the sequence is ATSFRREKFVPRGGPDGGDGGKGGSVW. The segment covering 33 to 43 has biased composition (gly residues); the sequence is GPDGGDGGKGG. The region spanning 160–348 is the OBG-type G domain; the sequence is ADVGLLGMPN…LVHQINQYLT (189 aa). Residues 166 to 173, 191 to 195, 213 to 216, 284 to 287, and 329 to 331 contribute to the GTP site; these read GMPNAGKS, FTTLH, DIPG, NKLD, and SAL. Mg(2+) contacts are provided by Ser-173 and Thr-193.

It belongs to the TRAFAC class OBG-HflX-like GTPase superfamily. OBG GTPase family. As to quaternary structure, monomer. Mg(2+) is required as a cofactor.

It is found in the cytoplasm. An essential GTPase which binds GTP, GDP and possibly (p)ppGpp with moderate affinity, with high nucleotide exchange rates and a fairly low GTP hydrolysis rate. Plays a role in control of the cell cycle, stress response, ribosome biogenesis and in those bacteria that undergo differentiation, in morphogenesis control. This is GTPase Obg from Neisseria meningitidis serogroup C / serotype 2a (strain ATCC 700532 / DSM 15464 / FAM18).